The following is a 471-amino-acid chain: Alpha-amylase (471 aa).

At Gln-1 the chain carries Pyrrolidone carboxylic acid. A disulfide bridge connects residues Cys-28 and Cys-84. The Ca(2+) site is built by Asn-98, Arg-146, and Asp-155. An intrachain disulfide couples Cys-134 to Cys-148. A chloride-binding site is contributed by Arg-183. Asp-185 (nucleophile) is an active-site residue. His-189 is a binding site for Ca(2+). The active-site Proton donor is the Glu-222. Asn-285 and Arg-321 together coordinate chloride. A compositionally biased stretch (polar residues) spans 326–343 (FDFTDNDQGPPQDGSGNL). Residues 326–346 (FDFTDNDQGPPQDGSGNLISP) form a disordered region. 2 disulfides stabilise this stretch: Cys-354/Cys-360 and Cys-425/Cys-437.

The protein belongs to the glycosyl hydrolase 13 family. As to quaternary structure, monomer. Requires Ca(2+) as cofactor. It depends on chloride as a cofactor.

It catalyses the reaction Endohydrolysis of (1-&gt;4)-alpha-D-glucosidic linkages in polysaccharides containing three or more (1-&gt;4)-alpha-linked D-glucose units.. This chain is Alpha-amylase, found in Tenebrio molitor (Yellow mealworm beetle).